The primary structure comprises 401 residues: Elongation factor Tu 1 (401 aa).

A tr-type G domain is found at 10–209 (KPHVNVGTIG…AVDEYIPTPV (200 aa)). Residues 19–26 (GHVDHGKT) form a G1 region. 19 to 26 (GHVDHGKT) is a binding site for GTP. Position 26 (T26) interacts with Mg(2+). A G2 region spans residues 60–64 (GITIA). The G3 stretch occupies residues 81–84 (DCPG). GTP is bound by residues 81–85 (DCPGH) and 136–139 (NKVD). A G4 region spans residues 136–139 (NKVD). The G5 stretch occupies residues 174–176 (SAL).

It belongs to the TRAFAC class translation factor GTPase superfamily. Classic translation factor GTPase family. EF-Tu/EF-1A subfamily. Monomer.

Its subcellular location is the cytoplasm. It carries out the reaction GTP + H2O = GDP + phosphate + H(+). GTP hydrolase that promotes the GTP-dependent binding of aminoacyl-tRNA to the A-site of ribosomes during protein biosynthesis. The chain is Elongation factor Tu 1 from Roseiflexus sp. (strain RS-1).